Consider the following 130-residue polypeptide: Putative antitoxin VapB50 (130 aa).

Its function is as follows. Possibly the antitoxin component of a type II toxin-antitoxin (TA) system. Its cognate toxin is VapC50. This Mycobacterium tuberculosis (strain ATCC 25618 / H37Rv) protein is Putative antitoxin VapB50.